Consider the following 202-residue polypeptide: MNLEQIYKDCGAYLQGHFLLSSGKHSEFYLQSAKVLEDPKLAGKLCDELAKIIASYDIKFDSICSPALGGILAGYELARACNKRFIFTERVEGVMNLRRGFEVKKGEKFIVCEDIITTGGSALESAKIIESLGGEVVGFAALANRGFCAVKNLNNPRKENAKLPENLPLFALGNFEFEIYEANVCPLCEKGTKAIKPGSRGN.

113 to 121 (EDIITTGGS) is a 5-phospho-alpha-D-ribose 1-diphosphate binding site. 2 residues coordinate orotate: Thr-117 and Arg-145.

It belongs to the purine/pyrimidine phosphoribosyltransferase family. PyrE subfamily. In terms of assembly, homodimer. It depends on Mg(2+) as a cofactor.

It carries out the reaction orotidine 5'-phosphate + diphosphate = orotate + 5-phospho-alpha-D-ribose 1-diphosphate. The protein operates within pyrimidine metabolism; UMP biosynthesis via de novo pathway; UMP from orotate: step 1/2. Catalyzes the transfer of a ribosyl phosphate group from 5-phosphoribose 1-diphosphate to orotate, leading to the formation of orotidine monophosphate (OMP). The sequence is that of Orotate phosphoribosyltransferase from Campylobacter lari (strain RM2100 / D67 / ATCC BAA-1060).